A 65-amino-acid polypeptide reads, in one-letter code: Large ribosomal subunit protein bL35 (65 aa).

The span at 1–16 (MPKQKTHRASAKRFKR) shows a compositional bias: basic residues. Residues 1–20 (MPKQKTHRASAKRFKRTGSG) are disordered.

This sequence belongs to the bacterial ribosomal protein bL35 family.

This Streptococcus pyogenes serotype M1 protein is Large ribosomal subunit protein bL35.